Here is a 454-residue protein sequence, read N- to C-terminus: UDP-glycosyltransferase 79A2 (454 aa).

UDP-alpha-D-glucose contacts are provided by residues Ser269, Trp330–Val331, His348–Glu356, and Lys370–Gln373.

This sequence belongs to the UDP-glycosyltransferase family.

May glycosylate diterpenes or flavonols in leaves. This chain is UDP-glycosyltransferase 79A2, found in Stevia rebaudiana (Stevia).